The sequence spans 261 residues: 14-3-3-like protein GF14-12 (261 aa).

This sequence belongs to the 14-3-3 family.

Is associated with a DNA binding complex to bind to the G box, a well-characterized cis-acting DNA regulatory element found in plant genes. This chain is 14-3-3-like protein GF14-12 (GRF2), found in Zea mays (Maize).